A 276-amino-acid chain; its full sequence is uncharacterized protein (276 aa).

To E.coli YjfZ.

This is an uncharacterized protein from Escherichia coli (strain K12).